The sequence spans 156 residues: B3 domain-containing protein At5g26805 (156 aa).

Positions 57-155 (KFQLPMEKIR…MFCFSVLDGR (99 aa)) form a DNA-binding region, TF-B3.

Its subcellular location is the nucleus. This Arabidopsis thaliana (Mouse-ear cress) protein is B3 domain-containing protein At5g26805.